The primary structure comprises 178 residues: uncharacterized protein (178 aa).

It belongs to the tail fiber family.

This is an uncharacterized protein from Escherichia coli (strain K12).